Consider the following 150-residue polypeptide: Putative STAG3-like protein 4 (150 aa).

Belongs to the SCC3 family.

The chain is Putative STAG3-like protein 4 (STAG3L4) from Homo sapiens (Human).